Here is a 401-residue protein sequence, read N- to C-terminus: MKTEVAEAIAEITRGAEEVLLEQELAEKLASGKPLTVKAGFDPTAPDLHLGHTVLINKLRVFQDFGHKVVFLIGDFTGMIGDPTGKNVTRKPLTTEQVIANAETYKEQVFKILDPAKTEIRFNSEWMSKMGAADMIKLAARQTVARMLERDDFKKRYQNNQSIAIHEFLYPLVQGWDSVELKADVELGGTDQRFNLLMGRELQKEEGQRPQTVIMTPLLEGLDGVQKMSKSLNNYIGITEPANDMFGKIMSVSDELMWRYFQLLSFRSITEIDELKAAVADGKNPRDVKVLLAKEIIARFHSEDDAEKAEQDFIQRFQKNALPDDIPEKTVQVGAEGMAIGNVLKEAGLVESTSEALRMIKQNAVKVDGEKFSDSRYLCTEKDSGVYQVGKRRFAKINLTA.

Positions 43–52 (PTAPDLHLGH) match the 'HIGH' region motif. The 'KMSKS' region motif lies at 227 to 231 (KMSKS). ATP is bound at residue lysine 230. The region spanning 338–399 (MAIGNVLKEA…GKRRFAKINL (62 aa)) is the S4 RNA-binding domain.

It belongs to the class-I aminoacyl-tRNA synthetase family. TyrS type 2 subfamily. Homodimer.

It is found in the cytoplasm. It catalyses the reaction tRNA(Tyr) + L-tyrosine + ATP = L-tyrosyl-tRNA(Tyr) + AMP + diphosphate + H(+). Functionally, catalyzes the attachment of tyrosine to tRNA(Tyr) in a two-step reaction: tyrosine is first activated by ATP to form Tyr-AMP and then transferred to the acceptor end of tRNA(Tyr). The sequence is that of Tyrosine--tRNA ligase from Idiomarina loihiensis (strain ATCC BAA-735 / DSM 15497 / L2-TR).